Here is a 190-residue protein sequence, read N- to C-terminus: UPF0149 protein NT01EI_3357 (190 aa).

This sequence belongs to the UPF0149 family.

The protein is UPF0149 protein NT01EI_3357 of Edwardsiella ictaluri (strain 93-146).